The sequence spans 364 residues: F-box protein At1g59680 (364 aa).

Residues 2-49 form the F-box domain; it reads TTMSDLSVDLVGEILSRVPLTSLSAVRCTCKSWNTLSKHQIFGKAELA.

This Arabidopsis thaliana (Mouse-ear cress) protein is F-box protein At1g59680.